We begin with the raw amino-acid sequence, 612 residues long: UvrABC system protein C (612 aa).

The GIY-YIG domain maps to 21–99 (KLPGVYQMYD…IKSQKPPFNI (79 aa)). The 36-residue stretch at 209 to 244 (EVLQQELQVEMEQASQALDFERAVVVRDQITDLRQV) folds into the UVR domain.

The protein belongs to the UvrC family. Interacts with UvrB in an incision complex.

Its subcellular location is the cytoplasm. Functionally, the UvrABC repair system catalyzes the recognition and processing of DNA lesions. UvrC both incises the 5' and 3' sides of the lesion. The N-terminal half is responsible for the 3' incision and the C-terminal half is responsible for the 5' incision. This Saccharophagus degradans (strain 2-40 / ATCC 43961 / DSM 17024) protein is UvrABC system protein C.